The primary structure comprises 337 residues: Inositol 2-dehydrogenase (337 aa).

It belongs to the Gfo/Idh/MocA family. As to quaternary structure, homotetramer.

The enzyme catalyses myo-inositol + NAD(+) = scyllo-inosose + NADH + H(+). Functionally, involved in the oxidation of myo-inositol (MI) to 2-keto-myo-inositol (2KMI or 2-inosose). This Ralstonia nicotianae (strain ATCC BAA-1114 / GMI1000) (Ralstonia solanacearum) protein is Inositol 2-dehydrogenase.